A 283-amino-acid chain; its full sequence is MRTQWPSPAKLNLFLYITGQRADGYHTLQTLFQFLDYGDTISIELRDDGDIRLLTPVEGVEHEDNLIVRAARLLMKTAADSGRLPTGSGANISIDKRLPMGGGLGGGSSNAATVLVALNHLWQCGLSMDELAEMGLTLGADVPVFVRGHAAFAEGVGEILTPVDPPEKWYLVAHPGVSIPTPVIFKDPELPRNTPKRSIETLLKCEFSNDCEVIARKRFREVDAVLSWLLEYAPSRLTGTGACVFAEFDTESEARQVLEQAPEWLNGFVAKGVNLSPLHRAML.

Residue Lys10 is part of the active site. 99 to 109 provides a ligand contact to ATP; the sequence is PMGGGLGGGSS. Asp141 is an active-site residue.

The protein belongs to the GHMP kinase family. IspE subfamily. Homodimer.

The catalysed reaction is 4-CDP-2-C-methyl-D-erythritol + ATP = 4-CDP-2-C-methyl-D-erythritol 2-phosphate + ADP + H(+). The protein operates within isoprenoid biosynthesis; isopentenyl diphosphate biosynthesis via DXP pathway; isopentenyl diphosphate from 1-deoxy-D-xylulose 5-phosphate: step 3/6. Its function is as follows. Catalyzes the phosphorylation of the position 2 hydroxy group of 4-diphosphocytidyl-2C-methyl-D-erythritol. This chain is 4-diphosphocytidyl-2-C-methyl-D-erythritol kinase, found in Shigella boydii serotype 18 (strain CDC 3083-94 / BS512).